Here is a 140-residue protein sequence, read N- to C-terminus: ATP synthase epsilon chain (140 aa).

It belongs to the ATPase epsilon chain family. In terms of assembly, F-type ATPases have 2 components, CF(1) - the catalytic core - and CF(0) - the membrane proton channel. CF(1) has five subunits: alpha(3), beta(3), gamma(1), delta(1), epsilon(1). CF(0) has three main subunits: a, b and c.

The protein localises to the cell inner membrane. In terms of biological role, produces ATP from ADP in the presence of a proton gradient across the membrane. The protein is ATP synthase epsilon chain of Neisseria meningitidis serogroup C / serotype 2a (strain ATCC 700532 / DSM 15464 / FAM18).